Consider the following 311-residue polypeptide: tRNA-cytidine(32) 2-sulfurtransferase (311 aa).

The PP-loop motif signature appears at Ser47 to Ser52. The [4Fe-4S] cluster site is built by Cys122, Cys125, and Cys213.

It belongs to the TtcA family. In terms of assembly, homodimer. Mg(2+) is required as a cofactor. [4Fe-4S] cluster serves as cofactor.

Its subcellular location is the cytoplasm. The catalysed reaction is cytidine(32) in tRNA + S-sulfanyl-L-cysteinyl-[cysteine desulfurase] + AH2 + ATP = 2-thiocytidine(32) in tRNA + L-cysteinyl-[cysteine desulfurase] + A + AMP + diphosphate + H(+). It participates in tRNA modification. Its function is as follows. Catalyzes the ATP-dependent 2-thiolation of cytidine in position 32 of tRNA, to form 2-thiocytidine (s(2)C32). The sulfur atoms are provided by the cysteine/cysteine desulfurase (IscS) system. The sequence is that of tRNA-cytidine(32) 2-sulfurtransferase from Salmonella heidelberg (strain SL476).